The primary structure comprises 511 residues: DEP domain-containing protein 7 (511 aa).

Positions 46–136 (LQTQVEVKKR…SSCSLYRFTT (91 aa)) constitute a DEP domain.

It belongs to the DEPDC7 family.

The chain is DEP domain-containing protein 7 (Depdc7) from Rattus norvegicus (Rat).